Here is an 882-residue protein sequence, read N- to C-terminus: Exo-beta-D-glucosaminidase ARB_07888 (882 aa).

Residues 1 to 21 (MWFVFRPAAIPALLLTLGVSA) form the signal peptide. Positions 22–31 (LSPLRPLVST) are excised as a propeptide. 6 N-linked (GlcNAc...) asparagine glycosylation sites follow: asparagine 86, asparagine 200, asparagine 234, asparagine 237, asparagine 287, and asparagine 442. Catalysis depends on aspartate 466, which acts as the Proton donor. The active-site Nucleophile is the glutamate 538. Asparagine 688, asparagine 773, and asparagine 816 each carry an N-linked (GlcNAc...) asparagine glycan.

It belongs to the glycosyl hydrolase 2 family. As to quaternary structure, monomer.

Its subcellular location is the secreted. The catalysed reaction is Hydrolysis of chitosan or chitosan oligosaccharides to remove successive D-glucosamine residues from the non-reducing termini.. Functionally, hydrolyzes chitosan and chitooligosaccharides with retention of anomeric configuration. In Arthroderma benhamiae (strain ATCC MYA-4681 / CBS 112371) (Trichophyton mentagrophytes), this protein is Exo-beta-D-glucosaminidase ARB_07888.